We begin with the raw amino-acid sequence, 198 residues long: MAVLALCLLWTLASAVRPAPVAPLGGPEPAQYEELTLLFHGALQLGQALNGVYRATEARLTEAGHSLGLYDRALEFLGTEVRQGQDATQELRTSLSEIQVEEDALHLRAEATARSLGEVARAQQALRDTVRRLQVQLRGAWLGQAHQEFETLKARADKQSHLLWALTGHVQRQQREMAEQQQWLRQIQQRLHTAALPA.

The N-terminal stretch at 1 to 15 is a signal peptide; it reads MAVLALCLLWTLASA.

The protein belongs to the ANGPTL8 family. As to quaternary structure, interacts with ANGPTL3. Post-translationally, proteolytically cleaved at the N-terminus. Expressed in liver and fat. Enriched in white and brown adipose tissues.

The protein localises to the secreted. Its function is as follows. Hormone that acts as a blood lipid regulator by regulating serum triglyceride levels. May be involved in the metabolic transition between fasting and refeeding: required to direct fatty acids to adipose tissue for storage in the fed state. According to a report, may act by promoting ANGPTL3 cleavage. According to another study, not required for cleavage of ANGPTL3. The polypeptide is Angiopoietin-like protein 8 (Mus musculus (Mouse)).